We begin with the raw amino-acid sequence, 147 residues long: Putative 2'-deoxynucleoside 5'-phosphate N-hydrolase 1 (147 aa).

Residues 10–16 (YFCGSIR), Tyr25, His42, Glu90, and 114–116 (SAM) contribute to the substrate site.

The protein belongs to the 2'-deoxynucleoside 5'-phosphate N-hydrolase 1 family. In terms of assembly, monomer and homodimer.

The protein resides in the cytoplasm. It localises to the nucleus. The catalysed reaction is a pyrimidine 2'-deoxyribonucleoside 5'-phosphate + H2O = a pyrimidine nucleobase + 2-deoxy-D-ribose 5-phosphate. It carries out the reaction a purine 2'-deoxyribonucleoside 5'-phosphate + H2O = a purine nucleobase + 2-deoxy-D-ribose 5-phosphate. In terms of biological role, catalyzes the cleavage of the N-glycosidic bond of deoxyribonucleoside 5'-monophosphates to yield deoxyribose 5-phosphate and a purine or pyrimidine base. This chain is Putative 2'-deoxynucleoside 5'-phosphate N-hydrolase 1, found in Nematostella vectensis (Starlet sea anemone).